We begin with the raw amino-acid sequence, 153 residues long: Ribosome maturation factor RimP (153 aa).

It belongs to the RimP family.

Its subcellular location is the cytoplasm. Its function is as follows. Required for maturation of 30S ribosomal subunits. This Chromohalobacter salexigens (strain ATCC BAA-138 / DSM 3043 / CIP 106854 / NCIMB 13768 / 1H11) protein is Ribosome maturation factor RimP.